Reading from the N-terminus, the 620-residue chain is Translation initiation factor IF-2 (620 aa).

The tr-type G domain occupies 119–288 (ERPPIVTIMG…IILISELENL (170 aa)). The tract at residues 128-135 (GHVDHGKT) is G1. 128–135 (GHVDHGKT) is a binding site for GTP. Residues 153–157 (GITQA) form a G2 region. Positions 175–178 (DTPG) are G3. GTP is bound by residues 175–179 (DTPGH) and 229–232 (NKID). A G4 region spans residues 229–232 (NKID). The interval 265–267 (SAI) is G5.

This sequence belongs to the TRAFAC class translation factor GTPase superfamily. Classic translation factor GTPase family. IF-2 subfamily.

It is found in the cytoplasm. One of the essential components for the initiation of protein synthesis. Protects formylmethionyl-tRNA from spontaneous hydrolysis and promotes its binding to the 30S ribosomal subunits. Also involved in the hydrolysis of GTP during the formation of the 70S ribosomal complex. The sequence is that of Translation initiation factor IF-2 from Mycoplasma capricolum subsp. capricolum (strain California kid / ATCC 27343 / NCTC 10154).